The sequence spans 499 residues: MKKYILALDQGTTSSRAIIFDKEQNILGVSQKEFTQIYPNQGWVEHNPLEIWASQYGVLQEVIAKTNITQEEVAAIGITNQRETTIVWDKNTGEPVYNAIVWQCRRTAGIIEELKLDKEFSEYVKENTGLLLDAYFSATKIKWILDNVEGARERAEKGELLFGTVDTWLVWKLTNGKVHVTDYTNASRTMLYNIKELRWDERILEKLNIPKSMLPEVKNSSEVYGYTNLGGTGGVRVPIAGMAGDQQCALFGQTCFEEGSVKNTYGTGCFLLMNTGEKMIHSKNGLVSTIAVGIDGKVQYALEGSVFVGGAVIQWIRDELKLVTDAADTEYFAQKVEDNGGVYVVPAFTGLGAPYWDMYARGAIFGLTRGANRNHIIRAALESIAYQSKDLIDAMQEDAGCKLTRLKVDGGASRNNLLMQFQADITGAEVVRPIITETTALGAAYLAGLAVGFWKSKEEIAEKWAVSQSYSPNLAEEKKEKLYKGWKKAVKRAEGWEEE.

Thr-12 is a binding site for ADP. ATP is bound by residues Thr-12, Thr-13, and Ser-14. Thr-12 is a sn-glycerol 3-phosphate binding site. Arg-16 is an ADP binding site. Residues Arg-82, Glu-83, Tyr-135, and Asp-245 each contribute to the sn-glycerol 3-phosphate site. 5 residues coordinate glycerol: Arg-82, Glu-83, Tyr-135, Asp-245, and Gln-246. ADP-binding residues include Thr-267 and Gly-310. Residues Thr-267, Gly-310, Gln-314, and Gly-411 each contribute to the ATP site. ADP-binding residues include Gly-411 and Asn-415.

This sequence belongs to the FGGY kinase family. In terms of assembly, homotetramer and homodimer (in equilibrium).

It carries out the reaction glycerol + ATP = sn-glycerol 3-phosphate + ADP + H(+). It participates in polyol metabolism; glycerol degradation via glycerol kinase pathway; sn-glycerol 3-phosphate from glycerol: step 1/1. Activated by phosphorylation and inhibited by fructose 1,6-bisphosphate (FBP). Its function is as follows. Key enzyme in the regulation of glycerol uptake and metabolism. Catalyzes the phosphorylation of glycerol to yield sn-glycerol 3-phosphate. This is Glycerol kinase from Clostridium beijerinckii (strain ATCC 51743 / NCIMB 8052) (Clostridium acetobutylicum).